Reading from the N-terminus, the 1448-residue chain is Sister chromatid cohesion protein PDS5 homolog B-A (1448 aa).

An HEAT repeat occupies 383–419; it reads LLVNDQLLNFVRERTLDKRWRVRKEAMMGLAQIYKKY. Over residues 1141-1155 the composition is skewed to polar residues; that stretch reads AGKQMLSKSSRMETV. The tract at residues 1141–1448 is disordered; sequence AGKQMLSKSS…TGRLRSAKKR (308 aa). The segment covering 1156 to 1168 has biased composition (low complexity); that stretch reads SNASSGSNPSSPG. Residues 1177-1186 are compositionally biased toward acidic residues; the sequence is MELDQSENED. Basic and acidic residues-rich tracts occupy residues 1196-1214, 1233-1243, and 1264-1273; these read KKSDKRDDSDLLKSELEKP, ELSKPAQEPKS, and WQEKRLKEDL. Residues 1285–1294 are compositionally biased toward basic residues; sequence KKGRRGRPPK. A DNA-binding region (a.T hook 1) is located at residues 1286–1298; that stretch reads KGRRGRPPKSAKM. Positions 1324–1341 are enriched in acidic residues; that stretch reads PTDEDDHLEISEEQDFEN. Over residues 1346-1356 the composition is skewed to basic residues; it reads RKGRGSSRRTP. 2 DNA-binding regions (a.T hook) span residues 1374 to 1386 and 1390 to 1402; these read QKRRGRPPKTPTV and KSHVGRPRKVVSK. The segment covering 1389–1399 has biased composition (basic residues); the sequence is KKSHVGRPRKV.

Belongs to the PDS5 family. In terms of assembly, interacts with the cohesin complex. In terms of processing, phosphorylated in mitotic cells.

It localises to the nucleus. In terms of biological role, plays a role in androgen-induced proliferative arrest. Required for maintenance of sister chromatid cohesion during mitosis. This Xenopus laevis (African clawed frog) protein is Sister chromatid cohesion protein PDS5 homolog B-A (pds5b-a).